Reading from the N-terminus, the 206-residue chain is Ribosomal RNA small subunit methyltransferase G (206 aa).

Residues Gly71, Phe76, 125–126 (IE), and Arg139 contribute to the S-adenosyl-L-methionine site.

This sequence belongs to the methyltransferase superfamily. RNA methyltransferase RsmG family.

The protein localises to the cytoplasm. It carries out the reaction guanosine(527) in 16S rRNA + S-adenosyl-L-methionine = N(7)-methylguanosine(527) in 16S rRNA + S-adenosyl-L-homocysteine. Its function is as follows. Specifically methylates the N7 position of guanine in position 527 of 16S rRNA. The polypeptide is Ribosomal RNA small subunit methyltransferase G (Cereibacter sphaeroides (strain ATCC 17023 / DSM 158 / JCM 6121 / CCUG 31486 / LMG 2827 / NBRC 12203 / NCIMB 8253 / ATH 2.4.1.) (Rhodobacter sphaeroides)).